A 410-amino-acid chain; its full sequence is Cysteine desulfurase IscS (410 aa).

Residues 79–80 (AT), N159, Q187, and 207–209 (SGH) contribute to the pyridoxal 5'-phosphate site. At K210 the chain carries N6-(pyridoxal phosphate)lysine. T248 provides a ligand contact to pyridoxal 5'-phosphate. C334 functions as the Cysteine persulfide intermediate in the catalytic mechanism. C334 contacts [2Fe-2S] cluster.

This sequence belongs to the class-V pyridoxal-phosphate-dependent aminotransferase family. NifS/IscS subfamily. Homodimer. Forms a heterotetramer with IscU, interacts with other sulfur acceptors. The cofactor is pyridoxal 5'-phosphate.

It localises to the cytoplasm. It catalyses the reaction (sulfur carrier)-H + L-cysteine = (sulfur carrier)-SH + L-alanine. The protein operates within cofactor biosynthesis; iron-sulfur cluster biosynthesis. Master enzyme that delivers sulfur to a number of partners involved in Fe-S cluster assembly, tRNA modification or cofactor biosynthesis. Catalyzes the removal of elemental sulfur atoms from cysteine to produce alanine. Functions as a sulfur delivery protein for Fe-S cluster synthesis onto IscU, an Fe-S scaffold assembly protein, as well as other S acceptor proteins. The sequence is that of Cysteine desulfurase IscS from Ehrlichia chaffeensis (strain ATCC CRL-10679 / Arkansas).